Here is a 113-residue protein sequence, read N- to C-terminus: MREWINQSKIDLLAKEIGEENVPILVNIFLGELNDYQSKLVSDTVADKLGYLKEISHALKSSAASFGADRLCAKAVELDSRAKSGEMMDISLEVEHMLELLKQTHQCYSDLVH.

The 96-residue stretch at 18-113 (GEENVPILVN…THQCYSDLVH (96 aa)) folds into the HPt domain. Position 57 is a phosphohistidine (His57).

In terms of assembly, monomer.

Functionally, phosphorelay protein which receives sensory signals from a sensory kinase and transmit them to LuxO. At low cell density, a phosphoryl group is transferred from the sensory kinase, probably on His-57 and this phosphoryl group is further transferred to LuxO. This Vibrio cholerae serotype O1 (strain ATCC 39315 / El Tor Inaba N16961) protein is Phosphorelay protein LuxU (luxU).